The primary structure comprises 165 residues: Iron sulfur cluster assembly protein 1, mitochondrial (165 aa).

The transit peptide at 1-27 (MLPVITRFARPALMAIRPVNAMGVLRA) directs the protein to the mitochondrion. The tract at residues 132–136 (LPPVK) is SSQ1 binding region.

It belongs to the NifU family. In terms of assembly, homodimer, but can exist as monomers or trimers. Oligomerization may be regulated by Zn(2+) availability. Component of the core Fe-S cluster (ISC) assembly machinery. Interacts with YFH1/frataxin with a 1 to 1 stoichiometry; the interaction is direct. Interacts with the mitochondrial co-chaperones JAC1 and SSQ1. Interacts with NFS1. Interacts with YAH1/ferredoxin; interacts with the reduced form. [2Fe-2S] cluster is required as a cofactor. It depends on Zn(2+) as a cofactor.

Its subcellular location is the mitochondrion matrix. It participates in cofactor biosynthesis; iron-sulfur cluster biosynthesis. In terms of biological role, scaffold protein for the de novo synthesis of iron-sulfur (Fe-S) clusters within mitochondria, which is required for maturation of both mitochondrial and cytoplasmic [2Fe-2S] and [4Fe-4S] proteins. First, a [2Fe-2S] cluster is transiently assembled on the scaffold proteins ISU1 and ISU2. In a second step, the cluster is released from ISU1/ISU2, transferred to glutaredoxin GRX5, followed by the formation of mitochondrial [2Fe-2S] proteins, the synthesis of [4Fe-4S] clusters and their target-specific insertion into the recipient apoproteins. Cluster assembly on ISU1/ISU2 depends on the function of the cysteine desulfurase complex NFS1-ISD11, which serves as the sulfur donor for cluster synthesis, the iron-binding protein frataxin (YFH1) as the putative iron donor, and the electron transfer chain comprised of ferredoxin reductase ARH1 and ferredoxin YAH1, which receive their electrons from NADH. Fe-S cluster release from ISU1/ISU2 is achieved by interaction with the Hsp70 chaperone SSQ1, assisted by the DnaJ-like co-chaperone JAC1 and the nucleotide exchange factor MGE1. ISU1 is the major isoform in yeast, while ISU2 is not detectable in cells grown to stationary phase. Also involved in production of a sulfur precursor required for thiolation of cytoplasmic tRNAs. This Saccharomyces cerevisiae (strain ATCC 204508 / S288c) (Baker's yeast) protein is Iron sulfur cluster assembly protein 1, mitochondrial.